The sequence spans 819 residues: DNA mismatch repair protein MutS (819 aa).

596 to 603 is a binding site for ATP; sequence GPNMSGKS.

Belongs to the DNA mismatch repair MutS family.

In terms of biological role, this protein is involved in the repair of mismatches in DNA. It is possible that it carries out the mismatch recognition step. This protein has a weak ATPase activity. The polypeptide is DNA mismatch repair protein MutS (Thermosipho melanesiensis (strain DSM 12029 / CIP 104789 / BI429)).